The following is a 645-amino-acid chain: Envelope glycoprotein (645 aa).

An N-terminal signal peptide occupies residues 1 to 36; sequence MEGPTHPKPFKDKTFSWDLIILVGVVRVLLRLDVGM. The Extracellular segment spans residues 37–589; it reads ANPSPHQVYN…FNKSPWFTTL (553 aa). Asparagine 46 and asparagine 61 each carry an N-linked (GlcNAc...) asparagine; by host glycan. 2 disulfide bridges follow: cysteine 128/cysteine 150 and cysteine 142/cysteine 155. The tract at residues 238 to 283 is disordered; the sequence is QAMGPNLVLPEQKPPSRQSQTKSKVATQKPQTNGTTPRSVAPATMS. Over residues 252 to 275 the composition is skewed to polar residues; sequence PSRQSQTKSKVATQKPQTNGTTPR. Asparagine 270, asparagine 305, and asparagine 310 each carry an N-linked (GlcNAc...) asparagine; by host glycan. Disulfide bonds link cysteine 315–cysteine 318, cysteine 315–cysteine 542, and cysteine 534–cysteine 541. The CXXC motif lies at 315–318; the sequence is CWLC. Residues asparagine 334, asparagine 337, asparagine 377, asparagine 393, and asparagine 413 are each glycosylated (N-linked (GlcNAc...) asparagine; by host). The fusion peptide stretch occupies residues 451-471; it reads ISLTVALMLGGLTVGGIAAGV. 2 coiled-coil regions span residues 479–528 and 538–574; these read LETA…ILFL and KEEC…SQQG. The tract at residues 517–533 is immunosuppression; sequence LQNRRGLDILFLQGGGL. A CX6CC motif is present at residues 534-542; the sequence is CAALKEECC. Residues 590-610 traverse the membrane as a helical segment; the sequence is ISSIMGPLLILLLILLFGPCI. Cysteine 609 is lipidated: S-palmitoyl cysteine; by host. Over 611-645 the chain is Cytoplasmic; the sequence is LNRLVQFVKDRISVVQALILTQQYQQIQQYDPDRP.

The mature envelope protein (Env) consists of a trimer of SU-TM heterodimers attached by a labile interchain disulfide bond. Post-translationally, specific enzymatic cleavages in vivo yield mature proteins. Envelope glycoproteins are synthesized as an inactive precursor that is N-glycosylated and processed likely by host cell furin or by a furin-like protease in the Golgi to yield the mature SU and TM proteins. The cleavage site between SU and TM requires the minimal sequence [KR]-X-[KR]-R. The R-peptide is released from the C-terminus of the cytoplasmic tail of the TM protein upon particle formation as a result of proteolytic cleavage by the viral protease. Cleavage of this peptide is required for TM to become fusogenic. The CXXC motif is highly conserved across a broad range of retroviral envelope proteins. It is thought to participate in the formation of a labile disulfide bond possibly with the CX6CC motif present in the transmembrane protein. Isomerization of the intersubunit disulfide bond to an SU intrachain disulfide bond is thought to occur upon receptor recognition in order to allow membrane fusion. In terms of processing, the transmembrane protein is palmitoylated. Post-translationally, the R-peptide is palmitoylated.

The protein resides in the virion membrane. It is found in the host cell membrane. The surface protein (SU) attaches the virus to the host cell by binding to its receptor. This interaction triggers the refolding of the transmembrane protein (TM) and is thought to activate its fusogenic potential by unmasking its fusion peptide. Fusion occurs at the host cell plasma membrane. Its function is as follows. The transmembrane protein (TM) acts as a class I viral fusion protein. Under the current model, the protein has at least 3 conformational states: pre-fusion native state, pre-hairpin intermediate state, and post-fusion hairpin state. During viral and target cell membrane fusion, the coiled coil regions (heptad repeats) assume a trimer-of-hairpins structure, positioning the fusion peptide in close proximity to the C-terminal region of the ectodomain. The formation of this structure appears to drive apposition and subsequent fusion of viral and target cell membranes. Membranes fusion leads to delivery of the nucleocapsid into the cytoplasm. The sequence is that of Envelope glycoprotein (env) from Feline sarcoma virus (strain SM) (Sm-FeSV).